Here is a 234-residue protein sequence, read N- to C-terminus: Ribonuclease 3 (234 aa).

One can recognise an RNase III domain in the interval 4–133 (LLDLEHKLNY…ILGAVYIDSN (130 aa)). Glutamate 46 is a binding site for Mg(2+). Residue aspartate 50 is part of the active site. Aspartate 119 and glutamate 122 together coordinate Mg(2+). Glutamate 122 is an active-site residue. The DRBM domain maps to 160–228 (DFKSILQEYV…AKALCIKLGV (69 aa)).

The protein belongs to the ribonuclease III family. As to quaternary structure, homodimer. It depends on Mg(2+) as a cofactor.

Its subcellular location is the cytoplasm. The catalysed reaction is Endonucleolytic cleavage to 5'-phosphomonoester.. Its function is as follows. Digests double-stranded RNA. Involved in the processing of primary rRNA transcript to yield the immediate precursors to the large and small rRNAs (23S and 16S). Processes some mRNAs, and tRNAs when they are encoded in the rRNA operon. Processes pre-crRNA and tracrRNA of type II CRISPR loci if present in the organism. This Fusobacterium nucleatum subsp. nucleatum (strain ATCC 25586 / DSM 15643 / BCRC 10681 / CIP 101130 / JCM 8532 / KCTC 2640 / LMG 13131 / VPI 4355) protein is Ribonuclease 3.